The primary structure comprises 74 residues: Anaphase-promoting complex subunit 13 (74 aa).

A disordered region spans residues 33–53; sequence LNELPDPEQDNGGTTESVKEQ.

It belongs to the APC13 family. In terms of assembly, the mammalian APC/C is composed at least of 14 distinct subunits ANAPC1, ANAPC2, CDC27/APC3, ANAPC4, ANAPC5, CDC16/APC6, ANAPC7, CDC23/APC8, ANAPC10, ANAPC11, CDC26/APC12, ANAPC13, ANAPC15 and ANAPC16 that assemble into a complex of at least 19 chains with a combined molecular mass of around 1.2 MDa; APC/C interacts with FZR1 and FBXO5.

It is found in the nucleus. It functions in the pathway protein modification; protein ubiquitination. Functionally, component of the anaphase promoting complex/cyclosome (APC/C), a cell cycle-regulated E3 ubiquitin ligase that controls progression through mitosis and the G1 phase of the cell cycle. The APC/C complex acts by mediating ubiquitination and subsequent degradation of target proteins: it mainly mediates the formation of 'Lys-11'-linked polyubiquitin chains and, to a lower extent, the formation of 'Lys-48'- and 'Lys-63'-linked polyubiquitin chains. The APC/C complex catalyzes assembly of branched 'Lys-11'-/'Lys-48'-linked branched ubiquitin chains on target proteins. This Pongo abelii (Sumatran orangutan) protein is Anaphase-promoting complex subunit 13 (ANAPC13).